A 175-amino-acid polypeptide reads, in one-letter code: Alpha-crystallin B chain (175 aa).

Methionine 1 is modified (N-acetylmethionine). Serine 19 is modified (phosphoserine). O-linked (GlcNAc) serine glycosylation is present at serine 41. Phosphoserine is present on residues serine 45 and serine 59. One can recognise a sHSP domain in the interval arginine 56–glutamate 164. Histidine 83 is a Zn(2+) binding site. The residue at position 92 (lysine 92) is an N6-acetyllysine; partial. Zn(2+) contacts are provided by histidine 104, glutamate 106, histidine 111, and histidine 119. Residues asparagine 146–lysine 175 are disordered. Lysine 166 carries the post-translational modification N6-acetyllysine. A glycan (O-linked (GlcNAc) threonine) is linked at threonine 170.

It belongs to the small heat shock protein (HSP20) family. In terms of assembly, heteromer composed of three CRYAA and one CRYAB subunits. Aggregates with homologous proteins, including the small heat shock protein HSPB1, to form large heteromeric complexes. Inter-subunit bridging via zinc ions enhances stability, which is crucial as there is no protein turn over in the lens. Interacts with HSPBAP1 and TTN/titin. Interacts with TMEM109; in the cellular response to DNA damage. Interacts with DES; binds rapidly during early stages of DES filament assembly and a reduced binding seen in the later stages. Interacts with TMED10; the interaction mediates the translocation from the cytoplasm into the ERGIC (endoplasmic reticulum-Golgi intermediate compartment) and thereby secretion. Interacts with ATP6V1A and with MTOR, forming a ternary complex. Lens as well as other tissues. Expressed in myocardial tissue.

It is found in the cytoplasm. The protein resides in the nucleus. The protein localises to the secreted. It localises to the lysosome. May contribute to the transparency and refractive index of the lens. Has chaperone-like activity, preventing aggregation of various proteins under a wide range of stress conditions. In lens epithelial cells, stabilizes the ATP6V1A protein, preventing its degradation by the proteasome. This chain is Alpha-crystallin B chain, found in Homo sapiens (Human).